The sequence spans 39 residues: LFECVLSCDIKKNGKPCKPKGEKKCSGGWRCKINFCLKV.

3 disulfides stabilise this stretch: C4/C25, C8/C31, and C17/C36.

Expressed by the venom gland.

Its subcellular location is the secreted. Toxin that inhibits voltage-gated calcium channels in rat cerebellar granule cells (IC(50)&lt;200 nM). Is lethal to cockroaches. This chain is Omega-theraphotoxin-Asp1a, found in Aphonopelma sp. (American tarantula).